The primary structure comprises 134 residues: DNA-binding protein inhibitor ID-2 (134 aa).

Positions 1–24 are disordered; that stretch reads MKAFSPVRSVRKNSLSDHGLGISR. S14 and S25 each carry phosphoserine. The bHLH domain occupies 23 to 75; sequence SRSKTPVDDPMSLLYNMNDCYSKLKELVPSIPQNKKVSKMEILQHVIDYILDL. The Nuclear export signal motif lies at 106 to 115; it reads LNTDISILSL.

In terms of assembly, interacts with GATA4 and NKX2-5. Interacts with NR0B2. Interacts with CLOCK and BMAL1. Interacts with IFI204. Interacts with NEDD9/HEF1. Interacts with ASB4; this interaction promotes ID2 proteasomal degradation. Post-translationally, ubiquitinated in a ASB4-depedent manner, leading to proteasomal degradation. In terms of processing, phosphorylated in vitro by CDK1, PKA and PKC.

The protein localises to the cytoplasm. Its subcellular location is the nucleus. In terms of biological role, transcriptional regulator (lacking a basic DNA binding domain) which negatively regulates the basic helix-loop-helix (bHLH) transcription factors by forming heterodimers and inhibiting their DNA binding and transcriptional activity. Implicated in regulating a variety of cellular processes, including cellular growth, senescence, differentiation, apoptosis, angiogenesis, and neoplastic transformation. Inhibits skeletal muscle and cardiac myocyte differentiation. Regulates the circadian clock by repressing the transcriptional activator activity of the CLOCK-BMAL1 heterodimer. Restricts the CLOCK and BMAL1 localization to the cytoplasm. Plays a role in both the input and output pathways of the circadian clock: in the input component, is involved in modulating the magnitude of photic entrainment and in the output component, contributes to the regulation of a variety of liver clock-controlled genes involved in lipid metabolism. In Bos taurus (Bovine), this protein is DNA-binding protein inhibitor ID-2 (ID2).